Consider the following 92-residue polypeptide: Small ribosomal subunit protein bS18 (92 aa).

Residues 1–22 (MADERAPQRSTSGPRKKRPFQR) are disordered.

Belongs to the bacterial ribosomal protein bS18 family. In terms of assembly, part of the 30S ribosomal subunit. Forms a tight heterodimer with protein bS6.

Its function is as follows. Binds as a heterodimer with protein bS6 to the central domain of the 16S rRNA, where it helps stabilize the platform of the 30S subunit. This Citrifermentans bemidjiense (strain ATCC BAA-1014 / DSM 16622 / JCM 12645 / Bem) (Geobacter bemidjiensis) protein is Small ribosomal subunit protein bS18.